We begin with the raw amino-acid sequence, 182 residues long: Heat shock protein beta-2 (182 aa).

Residues 55-163 enclose the sHSP domain; that stretch reads PAGEGSRAGA…DTEVNEVYIS (109 aa).

Belongs to the small heat shock protein (HSP20) family. In terms of assembly, interacts with DMPK; may enhance its kinase activity. As to expression, expressed preferentially in skeletal muscle and heart but not in the lens.

Its subcellular location is the cytoplasm. It localises to the nucleus. Its function is as follows. May regulate the kinase DMPK. The polypeptide is Heat shock protein beta-2 (HSPB2) (Homo sapiens (Human)).